Here is a 443-residue protein sequence, read N- to C-terminus: tRNA (guanine-N(7)-)-methyltransferase non-catalytic subunit TRM82 (443 aa).

The segment at 67-93 (ASKKLKTNDGEPVAQPKKQAKVPKPGP) is disordered. WD repeat units lie at residues 97–137 (PVYQ…KDNI), 193–235 (GHVS…IVDK), and 239–279 (GHEE…LLFK).

This sequence belongs to the WD repeat TRM82 family. As to quaternary structure, forms a heterodimer with the catalytic subunit TRM8.

The protein localises to the nucleus. It participates in tRNA modification; N(7)-methylguanine-tRNA biosynthesis. Functionally, required for the formation of N(7)-methylguanine at position 46 (m7G46) in tRNA. In the complex, it is required to stabilize and induce conformational changes of the catalytic subunit. The polypeptide is tRNA (guanine-N(7)-)-methyltransferase non-catalytic subunit TRM82 (Kluyveromyces lactis (strain ATCC 8585 / CBS 2359 / DSM 70799 / NBRC 1267 / NRRL Y-1140 / WM37) (Yeast)).